A 374-amino-acid chain; its full sequence is dTDP-3-amino-3,4,6-trideoxy-alpha-D-glucose transaminase (374 aa).

Pyridoxal 5'-phosphate is bound by residues Gly-60, Gln-160, Ser-181–Lys-186, Tyr-214, Tyr-221, Asn-229–Arg-231, and Tyr-316. Lys-186 carries the N6-(pyridoxal phosphate)lysine modification.

Belongs to the degT/dnrJ/eryC1 family. Pyridoxal 5'-phosphate serves as cofactor.

It carries out the reaction dTDP-3-amino-3,4,6-trideoxy-alpha-D-glucose + 2-oxoglutarate = dTDP-3-dehydro-4,6-dideoxy-alpha-D-glucose + L-glutamate. It participates in antibiotic biosynthesis. In terms of biological role, involved in the biosynthesis of the amino sugar dTDP-L-megosamine which is found in the macrolide antibiotic and antiparasitic megalomicin A. Catalyzes the reversible transfer of the amino group from L-glutamate to the C-3 position of dTDP-3-keto-4,6-deoxyglucose to yield dTDP-3-amino-3,4,6-trideoxyglucose. This Micromonospora megalomicea subsp. nigra protein is dTDP-3-amino-3,4,6-trideoxy-alpha-D-glucose transaminase.